The primary structure comprises 451 residues: 2,4-dinitrotoluene dioxygenase system, large oxygenase component (451 aa).

Residues 42 to 126 form the Rieske domain; it reads WLFLTHDSLI…LQSVPFEKEL (85 aa). Positions 84, 86, 104, and 107 each coordinate [2Fe-2S] cluster. Fe cation is bound by residues histidine 211, histidine 216, and aspartate 365.

The protein belongs to the bacterial ring-hydroxylating dioxygenase alpha subunit family. The 2,4-dinitrotoluene dioxygenase (DNTDO) multicomponent enzyme system is composed of an electron transfer component and a dioxygenase component (iron sulfur protein (ISP)). The electron transfer component is composed of a ferredoxin reductase (DntAa) and a ferredoxin (DntAb), and the dioxygenase component is formed of a large alpha subunit (DntAc) and a small beta subunit (DntAd). Requires [2Fe-2S] cluster as cofactor. Fe(2+) is required as a cofactor.

The catalysed reaction is 2,4-dinitrotoluene + NADH + O2 = 4-methyl-5-nitrocatechol + nitrite + NAD(+). In terms of biological role, component of the 2,4-dinitrotoluene dioxygenase (DNTDO) multicomponent enzyme system which catalyzes the incorporation of both atoms of molecular oxygen into 2,4-dinitrotoluene (DNT) to form 4-methyl-5-nitrocatechol (MNC) and nitrite. The alpha subunit has a catalytic role in the holoenzyme. Also able to convert naphthalene to cis-(1R,2S)-dihydroxy-1,2-dihydronaphthalene. In Burkholderia sp. (strain RASC), this protein is 2,4-dinitrotoluene dioxygenase system, large oxygenase component.